The primary structure comprises 638 residues: SUMO-activating enzyme subunit 2 (638 aa).

ATP is bound by residues 24 to 29 (GAGGIG), Asp-48, 56 to 59 (NLNR), Lys-72, 95 to 96 (SI), and 117 to 122 (DNRAAR). Residues Cys-158 and Cys-161 each contribute to the Zn(2+) site. A Glycyl lysine isopeptide (Lys-Gly) (interchain with G-Cter in SUMO1) cross-link involves residue Lys-164. Cys-173 acts as the Glycyl thioester intermediate in catalysis. Lys-190 participates in a covalent cross-link: Glycyl lysine isopeptide (Lys-Gly) (interchain with G-Cter in SUMO). Residues 202–233 (ADQEVSPDRADPEAAWEPTEAEARARASNEDG) form a disordered region. Ser-207 is modified (phosphoserine). The segment covering 222 to 233 (AEARARASNEDG) has biased composition (basic and acidic residues). Lys-236 is covalently cross-linked (Glycyl lysine isopeptide (Lys-Gly) (interchain with G-Cter in SUMO1); alternate). Glycyl lysine isopeptide (Lys-Gly) (interchain with G-Cter in SUMO2); alternate cross-links involve residues Lys-236 and Lys-257. Residues Lys-257 and Lys-271 each participate in a glycyl lysine isopeptide (Lys-Gly) (interchain with G-Cter in SUMO); alternate cross-link. At Lys-271 the chain carries N6-acetyllysine; alternate. A Glycyl lysine isopeptide (Lys-Gly) (interchain with G-Cter in SUMO) cross-link involves residue Lys-275. A Glycyl lysine isopeptide (Lys-Gly) (interchain with G-Cter in SUMO2) cross-link involves residue Lys-369. Lys-418 is covalently cross-linked (Glycyl lysine isopeptide (Lys-Gly) (interchain with G-Cter in SUMO1); alternate). Lys-418 is covalently cross-linked (Glycyl lysine isopeptide (Lys-Gly) (interchain with G-Cter in SUMO2); alternate). Zn(2+)-binding residues include Cys-439 and Cys-442. Ser-505 is subject to Phosphoserine. Residue Lys-538 forms a Glycyl lysine isopeptide (Lys-Gly) (interchain with G-Cter in SUMO2) linkage. Phosphoserine is present on residues Ser-548 and Ser-590. Basic and acidic residues predominate over residues 548 to 561 (SPEKVGPKQAEDAA). The segment at 548–638 (SPEKVGPKQA…EDPDDVIALD (91 aa)) is disordered. Residues 581-594 (EQDDVLIVDSDEEG) are compositionally biased toward acidic residues. The segment covering 603 to 614 (GDDKARKRKLEE) has biased composition (basic and acidic residues). Lys-609 participates in a covalent cross-link: Glycyl lysine isopeptide (Lys-Gly) (interchain with G-Cter in SUMO). A Glycyl lysine isopeptide (Lys-Gly) (interchain with G-Cter in SUMO); alternate cross-link involves residue Lys-611. Residue Lys-611 is modified to N6-acetyllysine; alternate. A Glycyl lysine isopeptide (Lys-Gly) (interchain with G-Cter in SUMO) cross-link involves residue Lys-621. The span at 628–638 (MEDPDDVIALD) shows a compositional bias: acidic residues.

This sequence belongs to the ubiquitin-activating E1 family. In terms of assembly, heterodimer of SAE1 and UBA2/SAE2. The heterodimer corresponds to the two domains that are encoded on a single polypeptide chain in ubiquitin-activating enzyme E1. Interacts with UBE2I. In terms of processing, sumoylated with SUMO1 and SUMO2/3 and by UBC9. Sumoylation at Lys-236 inhibits enzymatic activity. Sumoylation at the C-terminal lysine cluster plays an essential role in nuclear trafficking. In terms of tissue distribution, broadly expressed, with highest levels in testis.

Its subcellular location is the cytoplasm. It is found in the nucleus. It functions in the pathway protein modification; protein sumoylation. The heterodimer acts as an E1 ligase for SUMO1, SUMO2, SUMO3, and probably SUMO4. It mediates ATP-dependent activation of SUMO proteins followed by formation of a thioester bond between a SUMO protein and a conserved active site cysteine residue on UBA2/SAE2. This Mus musculus (Mouse) protein is SUMO-activating enzyme subunit 2 (Uba2).